A 119-amino-acid chain; its full sequence is UPF0102 protein GFO_3098 (119 aa).

This sequence belongs to the UPF0102 family.

The protein is UPF0102 protein GFO_3098 of Christiangramia forsetii (strain DSM 17595 / CGMCC 1.15422 / KT0803) (Gramella forsetii).